We begin with the raw amino-acid sequence, 314 residues long: tRNA pseudouridine synthase B (314 aa).

Position 43 (His43) interacts with substrate. Asp48 functions as the Nucleophile in the catalytic mechanism. Positions 76, 179, and 200 each coordinate substrate.

The protein belongs to the pseudouridine synthase TruB family. Type 1 subfamily.

The enzyme catalyses uridine(55) in tRNA = pseudouridine(55) in tRNA. In terms of biological role, responsible for synthesis of pseudouridine from uracil-55 in the psi GC loop of transfer RNAs. This is tRNA pseudouridine synthase B from Shigella boydii serotype 4 (strain Sb227).